The sequence spans 241 residues: ATP synthase subunit a (241 aa).

5 consecutive transmembrane segments (helical) span residues 23 to 43, 83 to 103, 113 to 133, 188 to 208, and 209 to 229; these read VSFT…AAFF, YFPY…LGML, IAVT…IGFA, VLAG…FAVV, and LGVT…FTIL.

This sequence belongs to the ATPase A chain family. As to quaternary structure, F-type ATPases have 2 components, CF(1) - the catalytic core - and CF(0) - the membrane proton channel. CF(1) has five subunits: alpha(3), beta(3), gamma(1), delta(1), epsilon(1). CF(0) has four main subunits: a, b, b' and c.

It is found in the cell inner membrane. Its function is as follows. Key component of the proton channel; it plays a direct role in the translocation of protons across the membrane. In Rhodospirillum rubrum (strain ATCC 11170 / ATH 1.1.1 / DSM 467 / LMG 4362 / NCIMB 8255 / S1), this protein is ATP synthase subunit a.